The following is a 364-amino-acid chain: DNA replication and repair protein RecF (364 aa).

30–37 contacts ATP; sequence GANGSGKT.

It belongs to the RecF family.

It is found in the cytoplasm. Its function is as follows. The RecF protein is involved in DNA metabolism; it is required for DNA replication and normal SOS inducibility. RecF binds preferentially to single-stranded, linear DNA. It also seems to bind ATP. The protein is DNA replication and repair protein RecF of Sodalis glossinidius (strain morsitans).